The sequence spans 224 residues: Transmembrane emp24 domain-containing protein 7 (224 aa).

Positions 1-34 (MPRPGSAQRWAAVAGRWGCRLLALLLLVPGPGGA) are cleaved as a signal peptide. Residues 35 to 187 (SEITFELPDN…RAEDLNTRVA (153 aa)) lie on the Lumenal side of the membrane. The GOLD domain maps to 46–128 (KQCFYEDIAQ…HKTVYFDFQV (83 aa)). A glycan (N-linked (GlcNAc...) asparagine) is linked at N103. A helical membrane pass occupies residues 188–208 (YWSVGEALILLVVSIGQVFLL). Residues 209-224 (KSFFSDKRTTTTRVGS) lie on the Cytoplasmic side of the membrane. The short motif at 211 to 212 (FF) is the COPII vesicle coat-binding element. Positions 211–224 (FFSDKRTTTTRVGS) match the COPI vesicle coat-binding motif.

Belongs to the EMP24/GP25L family. In terms of assembly, predominantly monomeric and to lesser extent homodimeric in endoplasmic reticulum, endoplasmic reticulum-Golgi intermediate compartment and cis-Golgi network. Oligomerizes with other members of the EMP24/GP25L family such as TMED2, TMED9 and TMED10. Interacts (via C-terminus) with COPG1; the interaction involves dimeric TMED7. N-linked glycosylated in complex form containing terminal sialic acid.

It is found in the endoplasmic reticulum membrane. Its subcellular location is the golgi apparatus. It localises to the cis-Golgi network membrane. The protein resides in the endoplasmic reticulum-Golgi intermediate compartment membrane. The protein localises to the cytoplasmic vesicle. It is found in the COPI-coated vesicle membrane. Its subcellular location is the COPII-coated vesicle membrane. Its function is as follows. Potential role in vesicular protein trafficking, mainly in the early secretory pathway. Appears to play a role in the biosynthesis of secreted cargo including processing and post-translational modifications. The polypeptide is Transmembrane emp24 domain-containing protein 7 (TMED7) (Homo sapiens (Human)).